A 66-amino-acid polypeptide reads, in one-letter code: Sodium/potassium-transporting ATPase subunit gamma (66 aa).

A helical transmembrane segment spans residues 29–46; the sequence is GGLIFAGLAFIVGLLILL.

It belongs to the FXYD family. Regulatory subunit of the sodium/potassium-transporting ATPase which is composed of a catalytic alpha subunit, an auxiliary non-catalytic beta subunit and an additional regulatory subunit. Expressed in the distal convoluted tubule in the kidney. Found on basolateral membranes of nephron epithelial cells.

Its subcellular location is the membrane. Functionally, may be involved in forming the receptor site for cardiac glycoside binding or may modulate the transport function of the sodium ATPase. The chain is Sodium/potassium-transporting ATPase subunit gamma (FXYD2) from Homo sapiens (Human).